The primary structure comprises 126 residues: Large ribosomal subunit protein bL12 (126 aa).

It belongs to the bacterial ribosomal protein bL12 family. As to quaternary structure, homodimer. Part of the ribosomal stalk of the 50S ribosomal subunit. Forms a multimeric L10(L12)X complex, where L10 forms an elongated spine to which 2 to 4 L12 dimers bind in a sequential fashion. Binds GTP-bound translation factors.

Forms part of the ribosomal stalk which helps the ribosome interact with GTP-bound translation factors. Is thus essential for accurate translation. The protein is Large ribosomal subunit protein bL12 of Elusimicrobium minutum (strain Pei191).